A 143-amino-acid chain; its full sequence is Large ribosomal subunit protein uL15 (143 aa).

Residues 1 to 58 form a disordered region; that stretch reads MQLNDLRSAPGARREKHRPGRGIGSGLGKTGGRGHKGQTSRSGGSIAPGFEGGQQPLH. Over residues 21 to 31 the composition is skewed to gly residues; sequence RGIGSGLGKTG.

This sequence belongs to the universal ribosomal protein uL15 family. As to quaternary structure, part of the 50S ribosomal subunit.

In terms of biological role, binds to the 23S rRNA. This is Large ribosomal subunit protein uL15 from Ectopseudomonas mendocina (strain ymp) (Pseudomonas mendocina).